Consider the following 227-residue polypeptide: Thymidine kinase 1 (227 aa).

Residues 15–22 (GPMFSGKT), 47–49 (DTR), and 91–94 (DEGQ) contribute to the ATP site. The active-site Proton acceptor is E92. F122 is a substrate binding site. Zn(2+) is bound by residues C147 and C150. Substrate is bound by residues 166–170 (IELIG) and Y175. Zn(2+) contacts are provided by C179 and C182. A compositionally biased stretch (polar residues) spans 187-196 (QNEGNSTKPS). The disordered stretch occupies residues 187-227 (QNEGNSTKPSKTARHSHSQSAPSVAPLAVNINPDDHLNNDY).

This sequence belongs to the thymidine kinase family. In terms of assembly, interacts with calmodulin in the presence of Ca(2+).

It catalyses the reaction thymidine + ATP = dTMP + ADP + H(+). This is Thymidine kinase 1 from Dictyostelium discoideum (Social amoeba).